Here is a 288-residue protein sequence, read N- to C-terminus: Aquaporin NIP2-1 (288 aa).

M1 carries the N-acetylmethionine modification. A run of 2 helical transmembrane segments spans residues 50–70 (LLAE…AIAV) and 77–97 (VVTL…LVYC). The NPA 1 signature appears at 106–108 (NPA). Transmembrane regions (helical) follow at residues 126-146 (AYIT…RLLF), 170-190 (LQAF…VCAV), and 202-222 (GLII…VSGA). Residues 225–227 (NPA) carry the NPA 2 motif. A helical membrane pass occupies residues 234–254 (LVWGCYKGIWIYLLAPTLGAV). S278 carries the phosphoserine modification.

It belongs to the MIP/aquaporin (TC 1.A.8) family. NIP (TC 1.A.8.12) subfamily. As to expression, specifically expressed in roots with high expression in root elongation zone and root stele.

It localises to the endoplasmic reticulum membrane. Its function is as follows. Low water transport activity in yeast cells. This chain is Aquaporin NIP2-1 (NIP2-1), found in Arabidopsis thaliana (Mouse-ear cress).